The primary structure comprises 547 residues: (R)-citramalate synthase (547 aa).

The Pyruvate carboxyltransferase domain maps to 8 to 278 (LWLYDTTLRD…YDCIEPEKLA (271 aa)).

It belongs to the alpha-IPM synthase/homocitrate synthase family.

It catalyses the reaction pyruvate + acetyl-CoA + H2O = (3R)-citramalate + CoA + H(+). It participates in amino-acid biosynthesis; L-isoleucine biosynthesis; 2-oxobutanoate from pyruvate: step 1/3. Functionally, catalyzes the condensation of pyruvate and acetyl-coenzyme A to form (R)-citramalate. This chain is (R)-citramalate synthase, found in Synechocystis sp. (strain ATCC 27184 / PCC 6803 / Kazusa).